Reading from the N-terminus, the 350-residue chain is Putative zinc metalloprotease jhp_0242 (350 aa).

Zn(2+) is bound at residue His16. Glu17 is an active-site residue. His20 serves as a coordination point for Zn(2+). 5 helical membrane-spanning segments follow: residues 43-63 (WFFK…GGYV), 94-114 (LWIL…VYFF), 249-269 (LIMG…VGAL), 277-297 (MLLL…LLPI), and 326-346 (LWLV…FNDI). A PDZ domain is found at 108 to 177 (AVLVYFFLAL…GELILEIERN (70 aa)).

It belongs to the peptidase M50B family. It depends on Zn(2+) as a cofactor.

It localises to the cell inner membrane. The sequence is that of Putative zinc metalloprotease jhp_0242 from Helicobacter pylori (strain J99 / ATCC 700824) (Campylobacter pylori J99).